We begin with the raw amino-acid sequence, 297 residues long: Bilin biosynthesis protein MpeU (297 aa).

The protein belongs to the CpcE/RpcE/PecE family.

In terms of biological role, an enzyme involved in the biosynthesis of bilin. This chain is Bilin biosynthesis protein MpeU (mpeU), found in Synechococcus sp. (strain WH8020).